Consider the following 619-residue polypeptide: Kininogen-2 (619 aa).

Positions 1-18 (MKLITILFLCSRLLPSLT) are cleaved as a signal peptide. Gln19 is modified (pyrrolidone carboxylic acid). Residues 27–131 (CNDQDVFKAV…IQTCLITPAE (105 aa)) enclose the Cystatin kininogen-type 1 domain. 9 disulfides stabilise this stretch: Cys27–Cys589, Cys82–Cys93, Cys106–Cys125, Cys141–Cys144, Cys205–Cys217, Cys228–Cys247, Cys261–Cys264, Cys325–Cys337, and Cys348–Cys367. Asn87 carries an N-linked (GlcNAc...) asparagine glycan. Thr136 is a glycosylation site (O-linked (GalNAc...) threonine; partial). In terms of domain architecture, Cystatin kininogen-type 2 spans 150 to 253 (TKSPDLEPVL…SQKCDLYPGE (104 aa)). Asn168 and Asn169 each carry an N-linked (GlcNAc...) asparagine glycan. Residue Asn197 is glycosylated (N-linked (GlcNAc...) asparagine; partial). N-linked (GlcNAc...) asparagine glycosylation occurs at Asn204. Residues 270 to 373 (VDSPDLEEAL…TVNCQPLGQT (104 aa)) enclose the Cystatin kininogen-type 3 domain. Residue Asn280 is glycosylated (N-linked (GlcNAc...) asparagine). Residue Pro380 is modified to 4-hydroxyproline. The disordered stretch occupies residues 394–495 (EGSTTVSLPH…GKNNGKHYDW (102 aa)). Ser396 carries O-linked (GalNAc...) serine glycosylation. O-linked (GalNAc...) threonine glycans are attached at residues Thr397 and Thr398. 2 O-linked (GalNAc...) serine glycosylation sites follow: Ser400 and Ser404. The segment covering 442 to 490 (GHKHKHDQGHGHHRSHGLGHGHQKQHGLGHGHKHGHGHGKHKNKGKNNG) has biased composition (basic residues). The O-linked (GalNAc...) serine glycan is linked to Ser510. O-linked (GalNAc...) threonine glycans are attached at residues Thr518, Thr522, Thr534, Thr546, Thr551, and Thr568.

Bradykinin is released from kininogen by plasma kallikrein. Plasma.

It localises to the secreted. The protein localises to the extracellular space. Its function is as follows. (1) Kininogens are inhibitors of thiol proteases; (2) HMW-kininogen plays an important role in blood coagulation by helping to position optimally prekallikrein and factor XI next to factor XII; (3) HMW-kininogen inhibits the thrombin- and plasmin-induced aggregation of thrombocytes; (4) the active peptide bradykinin that is released from HMW-kininogen shows a variety of physiological effects: (4A) influence in smooth muscle contraction, (4B) induction of hypotension, (4C) natriuresis and diuresis, (4D) decrease in blood glucose level, (4E) it is a mediator of inflammation and causes (4E1) increase in vascular permeability, (4E2) stimulation of nociceptors (4E3) release of other mediators of inflammation (e.g. prostaglandins), (4F) it has a cardioprotective effect (directly via bradykinin action, indirectly via endothelium-derived relaxing factor action); (5) LMW-kininogen inhibits the aggregation of thrombocytes; (6) LMW-kininogen is in contrast to HMW-kininogen not involved in blood clotting. In Bos taurus (Bovine), this protein is Kininogen-2 (KNG2).